The primary structure comprises 183 residues: Dual-action ribosomal maturation protein DarP (183 aa).

Belongs to the DarP family.

It is found in the cytoplasm. Member of a network of 50S ribosomal subunit biogenesis factors which assembles along the 30S-50S interface, preventing incorrect 23S rRNA structures from forming. Promotes peptidyl transferase center (PTC) maturation. This Escherichia coli O6:H1 (strain CFT073 / ATCC 700928 / UPEC) protein is Dual-action ribosomal maturation protein DarP.